The chain runs to 130 residues: MSKQAQSRSRKKARKNIPAGLAHIKSTFNNTIVTITDLSGNVIGWSSSGAVGFKGSRKSTPYAAQMAADAAARSAQEHGVKKVDVFVKGPGSGRETAIRSLQTAGLEIGSISDTTPLAFNGCRPPKKRLV.

It belongs to the universal ribosomal protein uS11 family. As to quaternary structure, part of the 30S ribosomal subunit. Interacts with proteins S7 and S18. Binds to IF-3.

Its function is as follows. Located on the platform of the 30S subunit, it bridges several disparate RNA helices of the 16S rRNA. Forms part of the Shine-Dalgarno cleft in the 70S ribosome. The polypeptide is Small ribosomal subunit protein uS11 (Tropheryma whipplei (strain TW08/27) (Whipple's bacillus)).